The following is a 366-amino-acid chain: Chorismate synthase (366 aa).

NADP(+) contacts are provided by Arg48 and Arg54. Residues 125-127, 238-239, Gly278, 293-297, and Arg319 contribute to the FMN site; these read RSS, NA, and KPTSS.

The protein belongs to the chorismate synthase family. Homotetramer. FMNH2 is required as a cofactor.

The catalysed reaction is 5-O-(1-carboxyvinyl)-3-phosphoshikimate = chorismate + phosphate. It participates in metabolic intermediate biosynthesis; chorismate biosynthesis; chorismate from D-erythrose 4-phosphate and phosphoenolpyruvate: step 7/7. Functionally, catalyzes the anti-1,4-elimination of the C-3 phosphate and the C-6 proR hydrogen from 5-enolpyruvylshikimate-3-phosphate (EPSP) to yield chorismate, which is the branch point compound that serves as the starting substrate for the three terminal pathways of aromatic amino acid biosynthesis. This reaction introduces a second double bond into the aromatic ring system. The chain is Chorismate synthase from Pseudoalteromonas atlantica (strain T6c / ATCC BAA-1087).